The chain runs to 232 residues: Acyl-protein thioesterase 1 (232 aa).

Active-site charge relay system residues include Ser-125, Asp-179, and His-212.

Belongs to the AB hydrolase superfamily. AB hydrolase 2 family.

It localises to the cytoplasm. Its subcellular location is the nucleus. It catalyses the reaction S-hexadecanoyl-L-cysteinyl-[protein] + H2O = L-cysteinyl-[protein] + hexadecanoate + H(+). Functionally, hydrolyzes fatty acids from S-acylated cysteine residues in proteins with a strong preference for palmitoylated G-alpha proteins over other acyl substrates. Mediates the deacylation of G-alpha proteins such as GPA1 in vivo, but has weak or no activity toward palmitoylated Ras proteins. Has weak lysophospholipase activity in vitro; however such activity may not exist in vivo. The polypeptide is Acyl-protein thioesterase 1 (Debaryomyces hansenii (strain ATCC 36239 / CBS 767 / BCRC 21394 / JCM 1990 / NBRC 0083 / IGC 2968) (Yeast)).